The following is a 98-amino-acid chain: YcgL domain-containing protein Ping_1076 (98 aa).

Residues Met-1–Lys-85 enclose the YcgL domain. The interval Pro-75–Ile-98 is disordered.

The sequence is that of YcgL domain-containing protein Ping_1076 from Psychromonas ingrahamii (strain DSM 17664 / CCUG 51855 / 37).